We begin with the raw amino-acid sequence, 445 residues long: Glutamate--tRNA ligase 1 (445 aa).

Positions 10-20 match the 'HIGH' region motif; sequence PSPTGMLHVGN. A 'KMSKS' region motif is present at residues 240–244; that stretch reads KISKR. Lys-243 lines the ATP pocket.

Belongs to the class-I aminoacyl-tRNA synthetase family. Glutamate--tRNA ligase type 1 subfamily. As to quaternary structure, monomer.

It localises to the cytoplasm. It catalyses the reaction tRNA(Glu) + L-glutamate + ATP = L-glutamyl-tRNA(Glu) + AMP + diphosphate. Functionally, catalyzes the attachment of glutamate to tRNA(Glu) in a two-step reaction: glutamate is first activated by ATP to form Glu-AMP and then transferred to the acceptor end of tRNA(Glu). In Rickettsia bellii (strain OSU 85-389), this protein is Glutamate--tRNA ligase 1.